The following is a 496-amino-acid chain: Glutamate--tRNA ligase (496 aa).

The 'HIGH' region motif lies at 10–20 (PSPTGPLHIGG). Residues 251–255 (KMSKR) carry the 'KMSKS' region motif. Lysine 254 provides a ligand contact to ATP.

This sequence belongs to the class-I aminoacyl-tRNA synthetase family. Glutamate--tRNA ligase type 1 subfamily. As to quaternary structure, monomer.

It localises to the cytoplasm. It carries out the reaction tRNA(Glu) + L-glutamate + ATP = L-glutamyl-tRNA(Glu) + AMP + diphosphate. Functionally, catalyzes the attachment of glutamate to tRNA(Glu) in a two-step reaction: glutamate is first activated by ATP to form Glu-AMP and then transferred to the acceptor end of tRNA(Glu). This Heliobacterium modesticaldum (strain ATCC 51547 / Ice1) protein is Glutamate--tRNA ligase.